A 386-amino-acid polypeptide reads, in one-letter code: Homogentisate solanesyltransferase, chloroplastic (386 aa).

The transit peptide at 1–69 (MELSISQSPR…STNYRKISIR (69 aa)) directs the protein to the chloroplast. 8 helical membrane passes run 130–150 (VLKALSGLLALICGNGYIVGI), 181–201 (LVIFFAIAGLLVVGFNFGPFI), 204–220 (LYSLGLFLGTIYSVPPL), 225–245 (FPVAAFLIIATVRGFLLNFGV), 259–279 (WSAPVAFITSFVTLFALVIAI), 306–326 (IAFLGSGLLLVNYVSAISLAF), 335–355 (SLMIPAHVILASGLIFQTWVL), and 365–385 (ISGYYRFIWNLFYAEYLLFPF).

It belongs to the UbiA prenyltransferase family.

It localises to the plastid. The protein localises to the chloroplast membrane. The catalysed reaction is all-trans-nonaprenyl diphosphate + homogentisate + H(+) = 2-methyl-6-(all-trans-nonaprenyl)benzene-1,4-diol + CO2 + diphosphate. With respect to regulation, inhibited by haloxydine (3,5-dichloro-2,6-difluoro-4-haloxypyridine). Its function is as follows. Involved in the synthesis of plastoquinone-9. Can use both homogentisic acid and 2,5-dihydroxyphenylacetic acid gamma-lactone as prenyl acceptors, and solanesyl diphosphate &gt; farnesyl diphosphate &gt; geranylgeranyl diphosphate &gt;&gt; phytyl diphosphate as prenyl donors. Do not catalyze the decardoxylation of homogentisate uncoupled from prenylation. In Arabidopsis thaliana (Mouse-ear cress), this protein is Homogentisate solanesyltransferase, chloroplastic (HST).